Reading from the N-terminus, the 50-residue chain is ATP synthase protein 8 (50 aa).

A helical membrane pass occupies residues 13–32; it reads ITFTFIILAITVYILSKYIL.

The protein belongs to the ATPase protein 8 family. As to quaternary structure, F-type ATPases have 2 components, CF(1) - the catalytic core - and CF(0) - the membrane proton channel.

The protein resides in the mitochondrion membrane. Functionally, mitochondrial membrane ATP synthase (F(1)F(0) ATP synthase or Complex V) produces ATP from ADP in the presence of a proton gradient across the membrane which is generated by electron transport complexes of the respiratory chain. F-type ATPases consist of two structural domains, F(1) - containing the extramembraneous catalytic core and F(0) - containing the membrane proton channel, linked together by a central stalk and a peripheral stalk. During catalysis, ATP synthesis in the catalytic domain of F(1) is coupled via a rotary mechanism of the central stalk subunits to proton translocation. Part of the complex F(0) domain. Minor subunit located with subunit a in the membrane. This is ATP synthase protein 8 (ATP8) from Podospora anserina (strain S / ATCC MYA-4624 / DSM 980 / FGSC 10383) (Pleurage anserina).